The following is a 336-amino-acid chain: tRNA N6-adenosine threonylcarbamoyltransferase (336 aa).

His-114 and His-118 together coordinate Fe cation. Substrate-binding positions include 136–140 (LVSGG), Asp-169, Gly-182, Asp-186, and Asn-275. Residue Asp-302 participates in Fe cation binding.

It belongs to the KAE1 / TsaD family. It depends on Fe(2+) as a cofactor.

The protein resides in the cytoplasm. The catalysed reaction is L-threonylcarbamoyladenylate + adenosine(37) in tRNA = N(6)-L-threonylcarbamoyladenosine(37) in tRNA + AMP + H(+). Required for the formation of a threonylcarbamoyl group on adenosine at position 37 (t(6)A37) in tRNAs that read codons beginning with adenine. Is involved in the transfer of the threonylcarbamoyl moiety of threonylcarbamoyl-AMP (TC-AMP) to the N6 group of A37, together with TsaE and TsaB. TsaD likely plays a direct catalytic role in this reaction. The chain is tRNA N6-adenosine threonylcarbamoyltransferase from Streptococcus agalactiae serotype III (strain NEM316).